The following is a 180-amino-acid chain: ATP synthase subunit delta (180 aa).

It belongs to the ATPase delta chain family. In terms of assembly, F-type ATPases have 2 components, F(1) - the catalytic core - and F(0) - the membrane proton channel. F(1) has five subunits: alpha(3), beta(3), gamma(1), delta(1), epsilon(1). F(0) has three main subunits: a(1), b(2) and c(10-14). The alpha and beta chains form an alternating ring which encloses part of the gamma chain. F(1) is attached to F(0) by a central stalk formed by the gamma and epsilon chains, while a peripheral stalk is formed by the delta and b chains.

It localises to the cell membrane. Its function is as follows. F(1)F(0) ATP synthase produces ATP from ADP in the presence of a proton or sodium gradient. F-type ATPases consist of two structural domains, F(1) containing the extramembraneous catalytic core and F(0) containing the membrane proton channel, linked together by a central stalk and a peripheral stalk. During catalysis, ATP synthesis in the catalytic domain of F(1) is coupled via a rotary mechanism of the central stalk subunits to proton translocation. Functionally, this protein is part of the stalk that links CF(0) to CF(1). It either transmits conformational changes from CF(0) to CF(1) or is implicated in proton conduction. This is ATP synthase subunit delta from Lactobacillus delbrueckii subsp. bulgaricus (strain ATCC 11842 / DSM 20081 / BCRC 10696 / JCM 1002 / NBRC 13953 / NCIMB 11778 / NCTC 12712 / WDCM 00102 / Lb 14).